A 161-amino-acid polypeptide reads, in one-letter code: Phosphopantetheine adenylyltransferase (161 aa).

Thr10 contacts substrate. ATP contacts are provided by residues 10 to 11 (TF) and His18. Substrate contacts are provided by Lys42, Met74, and Arg88. Residues 89 to 91 (GLR), Glu99, and 124 to 130 (WSFISSS) each bind ATP.

This sequence belongs to the bacterial CoaD family. As to quaternary structure, homohexamer. It depends on Mg(2+) as a cofactor.

The protein localises to the cytoplasm. The catalysed reaction is (R)-4'-phosphopantetheine + ATP + H(+) = 3'-dephospho-CoA + diphosphate. It functions in the pathway cofactor biosynthesis; coenzyme A biosynthesis; CoA from (R)-pantothenate: step 4/5. Functionally, reversibly transfers an adenylyl group from ATP to 4'-phosphopantetheine, yielding dephospho-CoA (dPCoA) and pyrophosphate. The protein is Phosphopantetheine adenylyltransferase of Serratia proteamaculans (strain 568).